The chain runs to 156 residues: Small ribosomal subunit protein uS7 (156 aa).

The protein belongs to the universal ribosomal protein uS7 family. In terms of assembly, part of the 30S ribosomal subunit. Contacts proteins S9 and S11.

In terms of biological role, one of the primary rRNA binding proteins, it binds directly to 16S rRNA where it nucleates assembly of the head domain of the 30S subunit. Is located at the subunit interface close to the decoding center, probably blocks exit of the E-site tRNA. The protein is Small ribosomal subunit protein uS7 of Streptococcus uberis (strain ATCC BAA-854 / 0140J).